A 396-amino-acid chain; its full sequence is Elongation factor Tu (396 aa).

A tr-type G domain is found at 10–205 (KSHANIGTIG…AVDEYIPTPE (196 aa)). Positions 19–26 (GHVDHGKT) are G1. 19 to 26 (GHVDHGKT) is a GTP binding site. Thr-26 is a Mg(2+) binding site. The segment at 61-65 (GITIS) is G2. Residues 82–85 (DCPG) form a G3 region. GTP is bound by residues 82–86 (DCPGH) and 137–140 (NKCD). The interval 137–140 (NKCD) is G4. The G5 stretch occupies residues 175-177 (SAL). At Thr-385 the chain carries Phosphothreonine.

It belongs to the TRAFAC class translation factor GTPase superfamily. Classic translation factor GTPase family. EF-Tu/EF-1A subfamily. As to quaternary structure, monomer. Interacts with BrxC. Phosphorylated on Thr-385 in vitro by PrkC in the presence of poly-L-lysine or myelin basic protein, dephosphorylated by PrpC.

Its subcellular location is the cytoplasm. It catalyses the reaction GTP + H2O = GDP + phosphate + H(+). Functionally, GTP hydrolase that promotes the GTP-dependent binding of aminoacyl-tRNA to the A-site of ribosomes during protein biosynthesis. The sequence is that of Elongation factor Tu from Bacillus subtilis (strain 168).